The following is a 69-amino-acid chain: Conotoxin Lt5.7 (69 aa).

The first 19 residues, Met1–Pro19, serve as a signal peptide directing secretion. Residues Lys20–Ala54 constitute a propeptide that is removed on maturation.

The protein belongs to the conotoxin T superfamily. Post-translationally, contains 2 disulfide bonds that can be either 'C1-C3, C2-C4' or 'C1-C4, C2-C3', since these disulfide connectivities have been observed for conotoxins with cysteine framework V (for examples, see AC P0DQQ7 and AC P81755). Expressed by the venom duct.

The protein resides in the secreted. This Conus litteratus (Lettered cone) protein is Conotoxin Lt5.7.